The following is a 156-amino-acid chain: Endoribonuclease YbeY (156 aa).

His-122, His-126, and His-132 together coordinate Zn(2+).

It belongs to the endoribonuclease YbeY family. The cofactor is Zn(2+).

It is found in the cytoplasm. Functionally, single strand-specific metallo-endoribonuclease involved in late-stage 70S ribosome quality control and in maturation of the 3' terminus of the 16S rRNA. This is Endoribonuclease YbeY from Geobacillus thermodenitrificans (strain NG80-2).